Here is a 232-residue protein sequence, read N- to C-terminus: uncharacterized protein (232 aa).

This is an uncharacterized protein from Acanthamoeba polyphaga (Amoeba).